The following is a 148-amino-acid chain: Probable histone H2A.1 (148 aa).

Residues 1-23 (MDASTKTKKGAGGRKGGPRKKSV) show a composition bias toward basic residues. Disordered regions lie at residues 1–28 (MDAS…RSTR) and 127–148 (KNEK…PKKA). Residues 131 to 142 (AATTTKSPSKAT) show a composition bias toward low complexity. 2 consecutive short sequence motifs (SPKK motif) follow at residues 137–140 (SPSK) and 144–147 (SPKK).

The protein belongs to the histone H2A family. In terms of assembly, the nucleosome is a histone octamer containing two molecules each of H2A, H2B, H3 and H4 assembled in one H3-H4 heterotetramer and two H2A-H2B heterodimers. The octamer wraps approximately 147 bp of DNA.

Its subcellular location is the nucleus. The protein localises to the chromosome. Core component of nucleosome. Nucleosomes wrap and compact DNA into chromatin, limiting DNA accessibility to the cellular machineries which require DNA as a template. Histones thereby play a central role in transcription regulation, DNA repair, DNA replication and chromosomal stability. DNA accessibility is regulated via a complex set of post-translational modifications of histones, also called histone code, and nucleosome remodeling. In Medicago truncatula (Barrel medic), this protein is Probable histone H2A.1.